The primary structure comprises 359 residues: Peptide chain release factor 1 (359 aa).

Residue Gln-236 is modified to N5-methylglutamine.

Belongs to the prokaryotic/mitochondrial release factor family. Post-translationally, methylated by PrmC. Methylation increases the termination efficiency of RF1.

It localises to the cytoplasm. Functionally, peptide chain release factor 1 directs the termination of translation in response to the peptide chain termination codons UAG and UAA. The protein is Peptide chain release factor 1 of Ureaplasma parvum serovar 3 (strain ATCC 27815 / 27 / NCTC 11736).